Consider the following 466-residue polypeptide: Cysteine--tRNA ligase (466 aa).

Cys-28 provides a ligand contact to Zn(2+). The 'HIGH' region signature appears at 30-40 (PTVYNYIHIGN). 3 residues coordinate Zn(2+): Cys-208, His-233, and Glu-237. The short motif at 265–269 (KMSKS) is the 'KMSKS' region element. Lys-268 serves as a coordination point for ATP.

It belongs to the class-I aminoacyl-tRNA synthetase family. As to quaternary structure, monomer. Requires Zn(2+) as cofactor.

It is found in the cytoplasm. The catalysed reaction is tRNA(Cys) + L-cysteine + ATP = L-cysteinyl-tRNA(Cys) + AMP + diphosphate. This Staphylococcus haemolyticus (strain JCSC1435) protein is Cysteine--tRNA ligase.